Here is a 164-residue protein sequence, read N- to C-terminus: UPF0561 protein C2orf68 homolog (164 aa).

Composition is skewed to basic and acidic residues over residues 1 to 13 (MEVI…ESVK) and 35 to 49 (IARD…QAKE). A disordered region spans residues 1 to 98 (MEVIRDGEGE…WNESSSGTEM (98 aa)). Residues 50–64 (KQRRRHTNTPRRPRR) are compositionally biased toward basic residues.

It belongs to the UPF0561 family.

This is UPF0561 protein C2orf68 homolog from Danio rerio (Zebrafish).